The chain runs to 683 residues: Transforming growth factor-beta-induced protein ig-h3 (683 aa).

Residues 1 to 23 (MALLGRLLPLALALALGPAATPA) form the signal peptide. Ser-37 carries the phosphoserine modification. One can recognise an EMI domain in the interval 45-99 (GPNVCAVQKLIGTNKKYFTNCKQWYQRKICGKSTVISYECCPGYEKVPGEKGCPA). 5 disulfide bridges follow: Cys-49–Cys-85, Cys-74–Cys-339, Cys-84–Cys-97, Cys-214–Cys-317, and Cys-473–Cys-478. Cys-65 carries the post-translational modification S-cysteinyl cysteine. FAS1 domains follow at residues 103 to 236 (LSNL…DKVI), 240 to 371 (TNNI…DELL), 375 to 498 (SAKT…DRML), and 502 to 632 (MGTV…SSVL). The Cell attachment site motif lies at 642–644 (RGD).

Binds to type I, II, and IV collagens. Gamma-carboxylation is controversial. Gamma-carboxyglutamated; gamma-carboxyglutamate residues are formed by vitamin K dependent carboxylation; this may be required for calcium binding. According to a more recent report, does not contain vitamin K-dependent gamma-carboxyglutamate residues. Post-translationally, the EMI domain contains 2 expected intradomain disulfide bridges (Cys-49-Cys85 and Cys-84-Cys-97) and one unusual interdomain disulfide bridge to the second FAS1 domain (Cys-74-Cys-339). This arrangement violates the predicted disulfide bridge pattern of an EMI domain.

The protein resides in the secreted. It is found in the extracellular space. The protein localises to the extracellular matrix. Plays a role in cell adhesion. May play a role in cell-collagen interactions. This Bos taurus (Bovine) protein is Transforming growth factor-beta-induced protein ig-h3 (TGFBI).